The chain runs to 578 residues: Glutathione hydrolase 2 (578 aa).

Positions 1-26 (MNSFMSLVRTATIALLLIAFLQNANA) are cleaved as a signal peptide. N-linked (GlcNAc...) asparagine glycosylation occurs at Asn94. An L-glutamate-binding site is contributed by Arg103. 2 N-linked (GlcNAc...) asparagine glycosylation sites follow: Asn176 and Asn227. The active-site Nucleophile is the Thr374. Residues Thr392, Asn394, Glu413, Asp416, 446–447 (SS), and 467–468 (GG) contribute to the L-glutamate site. Asn511 carries N-linked (GlcNAc...) asparagine glycosylation.

This sequence belongs to the gamma-glutamyltransferase family. Expressed in roots, immature trichomes and pollen. In developing siliques, specifically expressed in the embryo, endosperm, outer integument and a small portion of the funiculus.

The protein localises to the secreted. It localises to the extracellular space. Its subcellular location is the apoplast. It carries out the reaction an N-terminal (5-L-glutamyl)-[peptide] + an alpha-amino acid = 5-L-glutamyl amino acid + an N-terminal L-alpha-aminoacyl-[peptide]. The catalysed reaction is glutathione + H2O = L-cysteinylglycine + L-glutamate. The enzyme catalyses an S-substituted glutathione + H2O = an S-substituted L-cysteinylglycine + L-glutamate. Its pathway is sulfur metabolism; glutathione metabolism. Functionally, may be required for glutathione transport into developing seeds. This chain is Glutathione hydrolase 2 (GGT2), found in Arabidopsis thaliana (Mouse-ear cress).